We begin with the raw amino-acid sequence, 233 residues long: Small ribosomal subunit protein uS3 (233 aa).

Residues 28–96 enclose the KH type-2 domain; sequence EFADNLDSDF…LRKVVADIAG (69 aa).

Belongs to the universal ribosomal protein uS3 family. In terms of assembly, part of the 30S ribosomal subunit. Forms a tight complex with proteins S10 and S14.

Functionally, binds the lower part of the 30S subunit head. Binds mRNA in the 70S ribosome, positioning it for translation. The sequence is that of Small ribosomal subunit protein uS3 from Shigella flexneri.